We begin with the raw amino-acid sequence, 423 residues long: Glutamate-1-semialdehyde 2,1-aminomutase (423 aa).

Lys-262 carries the post-translational modification N6-(pyridoxal phosphate)lysine.

The protein belongs to the class-III pyridoxal-phosphate-dependent aminotransferase family. HemL subfamily. The cofactor is pyridoxal 5'-phosphate.

Its subcellular location is the cytoplasm. The enzyme catalyses (S)-4-amino-5-oxopentanoate = 5-aminolevulinate. Its pathway is porphyrin-containing compound metabolism; protoporphyrin-IX biosynthesis; 5-aminolevulinate from L-glutamyl-tRNA(Glu): step 2/2. This is Glutamate-1-semialdehyde 2,1-aminomutase from Methanosphaera stadtmanae (strain ATCC 43021 / DSM 3091 / JCM 11832 / MCB-3).